Reading from the N-terminus, the 952-residue chain is UvrABC system protein A (952 aa).

G38–S45 contributes to the ATP binding site. The segment at C259–C286 adopts a C4-type zinc-finger fold. ABC transporter domains lie at F316 to I595 and G615 to S944. G647–S654 contributes to the ATP binding site. The C4-type zinc finger occupies C746–C772.

This sequence belongs to the ABC transporter superfamily. UvrA family. As to quaternary structure, forms a heterotetramer with UvrB during the search for lesions.

The protein localises to the cytoplasm. Its function is as follows. The UvrABC repair system catalyzes the recognition and processing of DNA lesions. UvrA is an ATPase and a DNA-binding protein. A damage recognition complex composed of 2 UvrA and 2 UvrB subunits scans DNA for abnormalities. When the presence of a lesion has been verified by UvrB, the UvrA molecules dissociate. The protein is UvrABC system protein A of Mycoplasma genitalium (strain ATCC 33530 / DSM 19775 / NCTC 10195 / G37) (Mycoplasmoides genitalium).